We begin with the raw amino-acid sequence, 530 residues long: Putative ABC transporter ATP-binding protein SSO1893 (530 aa).

2 consecutive ABC transporter domains span residues 6–243 (IRDL…LGLE) and 282–516 (ILFA…EPPL). Residues 38 to 45 (GRSGSGKS) and 314 to 321 (GKNGSGKT) each bind ATP.

Belongs to the ABC transporter superfamily.

The protein resides in the cell membrane. Its function is as follows. Probably part of an ABC transporter complex. Responsible for energy coupling to the transport system. The protein is Putative ABC transporter ATP-binding protein SSO1893 of Saccharolobus solfataricus (strain ATCC 35092 / DSM 1617 / JCM 11322 / P2) (Sulfolobus solfataricus).